A 70-amino-acid chain; its full sequence is UPF0270 protein VV1_1320 (70 aa).

The protein belongs to the UPF0270 family.

The sequence is that of UPF0270 protein VV1_1320 from Vibrio vulnificus (strain CMCP6).